The sequence spans 91 residues: Progonadoliberin-1 (91 aa).

The signal sequence occupies residues 1–23 (MEPIPKLLAGLLLLTLCVVGCSS). At Gln-24 the chain carries Pyrrolidone carboxylic acid. Residue Gly-33 is modified to Glycine amide.

Belongs to the GnRH family. The precursor is cleaved by ACE, which removes the Gly-Lys-Arg peptide at the C-terminus, leading to mature hormone. The mature form of Gonadoliberin-1 is also cleaved and degraded by ACE.

The protein resides in the secreted. Its function is as follows. Stimulates the secretion of gonadotropins; it stimulates the secretion of both luteinizing and follicle-stimulating hormones. This Sus scrofa (Pig) protein is Progonadoliberin-1 (GNRH1).